A 213-amino-acid chain; its full sequence is Major fimbrial subunit (213 aa).

Residues 1 to 20 form the signal peptide; it reads MKKTLLGSLILLAFAGNVQA. Cys-41 and Cys-81 are joined by a disulfide.

This sequence belongs to the fimbrial protein family.

It is found in the fimbrium. In terms of biological role, mediates adherence to oropharyngeal epithelial cells. Helps the airway colonization process. The sequence is that of Major fimbrial subunit (hifA) from Haemophilus influenzae.